A 196-amino-acid chain; its full sequence is UMP-CMP kinase (196 aa).

13 to 18 serves as a coordination point for ATP; sequence GAGKGT. Phosphoserine is present on serine 33. Positions 33–63 are NMP; that stretch reads SAGELLRDERKNPDSQYGELIEKYIKDGKIV. Arginine 39 contributes to the a ribonucleoside 5'-phosphate binding site. N6-acetyllysine is present on residues lysine 43 and lysine 55. A ribonucleoside 5'-phosphate contacts are provided by residues 61-63 and 93-96; these read KIV and GFPR. Position 100 (asparagine 100) interacts with CMP. An N6-succinyllysine modification is found at lysine 106. Residues 133-143 are LID; sequence ERGKSSGRSDD. Arginine 134 contributes to the ATP binding site. Positions 140 and 151 each coordinate a ribonucleoside 5'-phosphate. Lysine 179 is a binding site for ATP. Serine 180 bears the Phosphoserine mark.

Belongs to the adenylate kinase family. UMP-CMP kinase subfamily. As to quaternary structure, monomer. The cofactor is Mg(2+).

The protein resides in the nucleus. It localises to the cytoplasm. It catalyses the reaction CMP + ATP = CDP + ADP. The catalysed reaction is dCMP + ATP = dCDP + ADP. The enzyme catalyses UMP + ATP = UDP + ADP. It carries out the reaction a 2'-deoxyribonucleoside 5'-diphosphate + ATP = a 2'-deoxyribonucleoside 5'-triphosphate + ADP. It catalyses the reaction a ribonucleoside 5'-diphosphate + ATP = a ribonucleoside 5'-triphosphate + ADP. Its function is as follows. Catalyzes the phosphorylation of pyrimidine nucleoside monophosphates at the expense of ATP. Plays an important role in de novo pyrimidine nucleotide biosynthesis. Has preference for UMP and CMP as phosphate acceptors. Also displays broad nucleoside diphosphate kinase activity. This Bos taurus (Bovine) protein is UMP-CMP kinase.